Consider the following 332-residue polypeptide: D-galactose/methyl-galactoside binding periplasmic protein MglB (332 aa).

Positions 1 to 23 are cleaved as a signal peptide; it reads MNKKVLTLSAVMASLLFGAHAHA. Beta-D-galactose-binding residues include D37 and N114. Beta-D-glucose-binding residues include D37 and N114. Positions 157, 159, 161, 163, and 165 each coordinate Ca(2+). Beta-D-galactose-binding residues include H175, D177, and R181. Beta-D-glucose contacts are provided by H175, D177, and R181. Ca(2+) is bound at residue E228. 3 residues coordinate beta-D-galactose: N234, D259, and N279. Beta-D-glucose-binding residues include N234, D259, and N279.

The protein belongs to the bacterial solute-binding protein 2 family. The ABC transporter complex is composed of one ATP-binding protein (MglA), two transmembrane proteins (MglC) and a solute-binding protein (MglB).

The protein resides in the periplasm. Part of the ABC transporter complex MglABC involved in galactose/methyl galactoside import. In addition, binds D-galactose and D-glucose and plays a role in the chemotaxis towards these two sugars by interacting with the Trg chemoreceptor. This is D-galactose/methyl-galactoside binding periplasmic protein MglB (mglB) from Salmonella typhimurium (strain LT2 / SGSC1412 / ATCC 700720).